A 330-amino-acid polypeptide reads, in one-letter code: Phosphate acyltransferase (330 aa).

Belongs to the PlsX family. As to quaternary structure, homodimer. Probably interacts with PlsY.

Its subcellular location is the cytoplasm. The catalysed reaction is a fatty acyl-[ACP] + phosphate = an acyl phosphate + holo-[ACP]. Its pathway is lipid metabolism; phospholipid metabolism. Its function is as follows. Catalyzes the reversible formation of acyl-phosphate (acyl-PO(4)) from acyl-[acyl-carrier-protein] (acyl-ACP). This enzyme utilizes acyl-ACP as fatty acyl donor, but not acyl-CoA. In Campylobacter hominis (strain ATCC BAA-381 / DSM 21671 / CCUG 45161 / LMG 19568 / NCTC 13146 / CH001A), this protein is Phosphate acyltransferase.